Reading from the N-terminus, the 95-residue chain is Integration host factor subunit beta (95 aa).

The disordered stretch occupies residues 59–95 (RVGRNPKTGQSVRLDGKFVPHFKPGKELRDRVNEDES). A compositionally biased stretch (basic and acidic residues) spans 72-95 (LDGKFVPHFKPGKELRDRVNEDES).

It belongs to the bacterial histone-like protein family. In terms of assembly, heterodimer of an alpha and a beta chain.

Its function is as follows. This protein is one of the two subunits of integration host factor, a specific DNA-binding protein that functions in genetic recombination as well as in transcriptional and translational control. In Ectopseudomonas mendocina (strain ymp) (Pseudomonas mendocina), this protein is Integration host factor subunit beta.